We begin with the raw amino-acid sequence, 300 residues long: Phosphatidylserine decarboxylase proenzyme (300 aa).

Residues Asp117, His173, and Ser260 each act as charge relay system; for autoendoproteolytic cleavage activity in the active site. Ser260 functions as the Schiff-base intermediate with substrate; via pyruvic acid; for decarboxylase activity in the catalytic mechanism. Ser260 carries the post-translational modification Pyruvic acid (Ser); by autocatalysis.

The protein belongs to the phosphatidylserine decarboxylase family. PSD-B subfamily. Prokaryotic type II sub-subfamily. Heterodimer of a large membrane-associated beta subunit and a small pyruvoyl-containing alpha subunit. It depends on pyruvate as a cofactor. Post-translationally, is synthesized initially as an inactive proenzyme. Formation of the active enzyme involves a self-maturation process in which the active site pyruvoyl group is generated from an internal serine residue via an autocatalytic post-translational modification. Two non-identical subunits are generated from the proenzyme in this reaction, and the pyruvate is formed at the N-terminus of the alpha chain, which is derived from the carboxyl end of the proenzyme. The autoendoproteolytic cleavage occurs by a canonical serine protease mechanism, in which the side chain hydroxyl group of the serine supplies its oxygen atom to form the C-terminus of the beta chain, while the remainder of the serine residue undergoes an oxidative deamination to produce ammonia and the pyruvoyl prosthetic group on the alpha chain. During this reaction, the Ser that is part of the protease active site of the proenzyme becomes the pyruvoyl prosthetic group, which constitutes an essential element of the active site of the mature decarboxylase.

It is found in the cell membrane. The enzyme catalyses a 1,2-diacyl-sn-glycero-3-phospho-L-serine + H(+) = a 1,2-diacyl-sn-glycero-3-phosphoethanolamine + CO2. Its pathway is phospholipid metabolism; phosphatidylethanolamine biosynthesis; phosphatidylethanolamine from CDP-diacylglycerol: step 2/2. Its function is as follows. Catalyzes the formation of phosphatidylethanolamine (PtdEtn) from phosphatidylserine (PtdSer). In Fusobacterium nucleatum subsp. nucleatum (strain ATCC 25586 / DSM 15643 / BCRC 10681 / CIP 101130 / JCM 8532 / KCTC 2640 / LMG 13131 / VPI 4355), this protein is Phosphatidylserine decarboxylase proenzyme.